Here is a 174-residue protein sequence, read N- to C-terminus: MTKRWFNVGKIVNTHGIKGEVRVISKTDFAEERYKPGNTLYLFMDGRNEPVEVTVNTHRLHKQFHLLQFKERQNLNEVEELKNAIIKVPEEELGELNEGEFYFHEIIGCEVFTEEGELIGKVKEILTPGANDVWVIGRKGKKDALIPYIESVVKHIDVREKKIEIELMEGLIDE.

The region spanning 98–171 is the PRC barrel domain; it reads EGEFYFHEII…KIEIELMEGL (74 aa).

It belongs to the RimM family. As to quaternary structure, binds ribosomal protein uS19.

It localises to the cytoplasm. Functionally, an accessory protein needed during the final step in the assembly of 30S ribosomal subunit, possibly for assembly of the head region. Essential for efficient processing of 16S rRNA. May be needed both before and after RbfA during the maturation of 16S rRNA. It has affinity for free ribosomal 30S subunits but not for 70S ribosomes. This chain is Ribosome maturation factor RimM, found in Bacillus subtilis (strain 168).